Here is a 196-residue protein sequence, read N- to C-terminus: Peptidyl-tRNA hydrolase (196 aa).

Residue His15 participates in tRNA binding. The active-site Proton acceptor is His20. TRNA is bound by residues Tyr66, Asn68, and Asn114.

The protein belongs to the PTH family. As to quaternary structure, monomer.

Its subcellular location is the cytoplasm. The catalysed reaction is an N-acyl-L-alpha-aminoacyl-tRNA + H2O = an N-acyl-L-amino acid + a tRNA + H(+). Hydrolyzes ribosome-free peptidyl-tRNAs (with 1 or more amino acids incorporated), which drop off the ribosome during protein synthesis, or as a result of ribosome stalling. Functionally, catalyzes the release of premature peptidyl moieties from peptidyl-tRNA molecules trapped in stalled 50S ribosomal subunits, and thus maintains levels of free tRNAs and 50S ribosomes. This is Peptidyl-tRNA hydrolase from Polynucleobacter necessarius subsp. necessarius (strain STIR1).